The chain runs to 134 residues: Probable salivary secreted peptide (134 aa).

An N-terminal signal peptide occupies residues 1-24 (MGAQKTIAYLAIIAIAVIFAQVNT).

It localises to the secreted. The protein is Probable salivary secreted peptide of Bombus ignitus (Bumblebee).